Consider the following 229-residue polypeptide: Heptaprenylglyceryl phosphate synthase (229 aa).

Residue K12 participates in sn-glycerol 1-phosphate binding. D14 and S40 together coordinate Mg(2+). Residues 159–164, G189, and 209–210 each bind sn-glycerol 1-phosphate; these read YLEYSG and GN.

Belongs to the GGGP/HepGP synthase family. Group I subfamily. Homodimer. Mg(2+) is required as a cofactor.

It catalyses the reaction sn-glycerol 1-phosphate + all-trans-heptaprenyl diphosphate = 3-heptaprenyl-sn-glycero-1-phosphate + diphosphate. Its pathway is membrane lipid metabolism; glycerophospholipid metabolism. Functionally, prenyltransferase that catalyzes in vivo the transfer of the heptaprenyl moiety of heptaprenyl pyrophosphate (HepPP; 35 carbon atoms) to the C3 hydroxyl of sn-glycerol-1-phosphate (G1P), producing heptaprenylglyceryl phosphate (HepGP). This reaction is an ether-bond-formation step in the biosynthesis of archaea-type G1P-based membrane lipids found in Bacillales. This Bacillus thuringiensis (strain Al Hakam) protein is Heptaprenylglyceryl phosphate synthase.